A 147-amino-acid polypeptide reads, in one-letter code: Large ribosomal subunit protein uL16 (147 aa).

It belongs to the universal ribosomal protein uL16 family. Part of the 50S ribosomal subunit.

Functionally, binds 23S rRNA and is also seen to make contacts with the A and possibly P site tRNAs. This chain is Large ribosomal subunit protein uL16, found in Clostridium novyi (strain NT).